A 2617-amino-acid chain; its full sequence is MESEEEQHMTTLLCMGFSDPATIRKALRLAKNDINEAVALLTNERPGLDYGGYEPMDSGGPSPGPGGGPRGDSGSDGSGPSRGGSTGGGGGFDPPPAYHEVVDAEKNDENGNCSGEGIEFPTTNLYELESRVLTDHWSIPYKREESLGKCLLASTYLARLGLSESDENCKRFMERCMPEAFKKLLTSSAVHKWGTEIHEGIYNMLMLLIELVAERMKQDPIPIGLLGVLTMAFNPDNEYHFKNRMKVSQRNWAEVFGEGNMFAISPVSTFQKEPHGWVVDLVNKFGELGGFAAIQAKLHSEDIELGAVSALVQPLGVCAEYLNSSVVQPMLDPVILTTIQDVRSVEEKDLKDKRLVSIPELLSAIKLLCMRFQPALVTTVDALRLDILLRMLKSPHFSAKMNSLKEVTKLIEDSTLSKSVKNAIDTDRLLDWLVENSVLSIALEGNIDQAQYCDRIKGIIELLGSKLSLDELTKIWKIQSGQSSTVIENIHTIIAAAAVKFNADQLNHLFVLIQKSWETESDRVRQKLLSLIGRIGREARFEATSGKVLDVLWELAHLPTLPSSLIQQALEEHLTILSDAYAVKEAVKRSYIIKCIEDIKRPGEWSSLEKNKKDGFKSSQLNNPQFVWVVPALRQLHEITRSFIKQTYQKQDKSIIQDLKKNFEIVKLVTGSLLACHRLAAAVAGPGGLTGLTLVDGRYTYREYLEAHLKFLAFFLQEATLYLGWNRAKEIWECLVTGQDVCELDREMCFEWFTKGQHDLESDVQQQLFKEKILKLESYEITMNGFNLFKTFFENVNLCDHRLKRQGAQLYVEKLELVGMDFIWKIAMESPDEEIANEAIQLIINYSYINLNPRLKKDSVSLHKKFIADCYTRLEAASSALGGPTLTHAVTRATKMLTATAMPTVATSVQSPYRSTKLVIIERLLLLAERYVITIEDFYSVPRTILPHGASFHGHLLTLNVTYESTKDTFTVEAHSNETIGSVRWKIAKQLCSPVDNIQIFTNDSLLTVNKDQKLLHQLGFSDEQVLTVKTSGSGTPSGSSADSSTSSSSSSSGAFSSSYAMEQEKSLPGVVMALVCNVFDMLYQLANLEEPRITLRVRKLLLLIPTDPAIQEALDQLDSLGRKKTLLSETSSQSSKSPSLSSKQQHQPSASSILESLFRSFAPGMSTFRVLYNLEVLSSKLMPTADDDMARSCAKSFCENFLKAGGLSLVVNVMQRDSIPSEVDYETRQGVYSICLQLARFLLVGQTMPTSLDEDLTKDGIEALSSRPFRNVSRQTSRQMSLCGTPEKSSYRQLSVSDRSSIRVEEIIPAARVAIQTMEASDFTATVACFMRLSWAAAAGRLDLVGSSQPIKESNSLFPAGIRSRLSSSGSNCSSSSEGEPAALHAGICVRQQSVSTKDALIAGEALSLLVTCLQLRSQQLASFYSLPCVADFIIDILLGSPSAEIRRVACDQLYTLSQTDTSAHPEVQKPNQFLLGVILTAQLPLWSPTSIMRGVNQRLLSQCMEYFDLRCQLLDDLTTSEMDQLRISPATMLEDEITWLDNFEPNRTADCETSEADNILLAGHLRLIKTLLSLCGAEKEMLGSSLIKPLLDDFLFRASRIIVNSHSPASSAAISQQDFHPKCSTVNSRLAAYEVLVMLADSSPSNLQIITKELLSMHHQPDPALTKEFDYLPPVDSRSSSGFVGLRNGGATCYMNAVFQQLYMQPGLPESLLSVDDDTDNPDDSVFYQVQSLFGHLMESKLQYYVPENFWKIFKMWNKELYVREQQDAYEFFTSLIDQMDEYLKKMGREQIFKNTFQGIYSDQKICKDCPHRYEREEAFMALNLGVTSCQSLEISLDQFVRGEVLEGSNAYYCEKCKEKRITVKRTCIKSLPSVLVIHLMRFGFDWESGRSIKYDEQIRFPWMLNMEPYTVAGMARQDSSSEVGENGRNMDQGGGGSPRKKVALTENYELVGVIVHSGQAHAGHYYSFIKDRRGCGKGKWYKFNDTVIEEFDLNDETLEYECFGGEYRPKVYDQTNPYTDVRRRYWNAYMLFYQRVSDQNSPVLPKKSRVSVVRQEAEDLSLSAPSSPEISPQSSPRPHRPNNDRLSILTKLVKKGEKKGLFVEKMPARIYQMVRDENLKFMKNRDVYSSDYFSFVLSLASLNATKLKHPYYPCMAKVSLQLAIQFLFQTYLRTKKKLRVDTEEWIATIEALLSKSLDACQWLVEYFISSEGRELVKVFLLECSVREVRVAVATILEKTLDSALFYQDKLKSLHQLLEVLLALLDKDVPENCKNCAQYFSLFNTFVQKQGIRAGDLLLRHSALRHMISFLLGVSRQNSQIRRWSSAQAREFGNLHNTVALLVLHSDVSSQRNVAPGIFKQRPPISVAPSSPLLPLHEEVEALLFLSEGKPYLLEVMFALRELTGSLLALMEMVVYCCFCNEHFSFTMLHFIKNQLETAPPHELKNTFQLLHEVLVIEDPIQVERVKFVFETENGLLALMHHSNHVDSSRCYQCVKFLVTLAQKCPAAKEYFKENSHHWSWAVQWLQKKMSEHYWTPQSNVSNETSTGKTFQRTISAQDTLAYATALLNEKEQSGSSNGSESSPANENGERHLQQGSESPMMIGELRSDLDDVDP.

Residues 3–44 (SEEEQHMTTLLCMGFSDPATIRKALRLAKNDINEAVALLTNE) enclose the UBA domain. The interval 45–99 (RPGLDYGGYEPMDSGGPSPGPGGGPRGDSGSDGSGPSRGGSTGGGGGFDPPPAYH) is disordered. S62 and S85 each carry phosphoserine. A compositionally biased stretch (gly residues) spans 65 to 92 (PGGGPRGDSGSDGSGPSRGGSTGGGGGF). Residue Y939 is modified to Phosphotyrosine. Disordered regions lie at residues 1030-1056 (KTSGSGTPSGSSADSSTSSSSSSSGAF) and 1127-1148 (LLSETSSQSSKSPSLSSKQQHQ). Composition is skewed to low complexity over residues 1031–1056 (TSGSGTPSGSSADSSTSSSSSSSGAF) and 1128–1148 (LSETSSQSSKSPSLSSKQQHQ). Phosphoserine occurs at positions 1138 and 1282. Residues 1686-2039 (VGLRNGGATC…NAYMLFYQRV (354 aa)) form the USP domain. C1695 functions as the Nucleophile in the catalytic mechanism. Residues 1920-1942 (QDSSSEVGENGRNMDQGGGGSPR) form a disordered region. A Phosphoserine modification is found at S1940. H1967 serves as the catalytic Proton acceptor. Phosphoserine occurs at positions 2044, 2074, and 2558. The disordered stretch occupies residues 2060–2087 (AEDLSLSAPSSPEISPQSSPRPHRPNND). Residues 2066–2079 (SAPSSPEISPQSSP) show a composition bias toward low complexity. The residue at position 2562 (T2562) is a Phosphothreonine. The interval 2572 to 2617 (EKEQSGSSNGSESSPANENGERHLQQGSESPMMIGELRSDLDDVDP) is disordered. The span at 2576–2589 (SGSSNGSESSPANE) shows a compositional bias: low complexity. S2601 bears the Phosphoserine mark. The span at 2608–2617 (LRSDLDDVDP) shows a compositional bias: basic and acidic residues.

The protein belongs to the peptidase C19 family.

The catalysed reaction is Thiol-dependent hydrolysis of ester, thioester, amide, peptide and isopeptide bonds formed by the C-terminal Gly of ubiquitin (a 76-residue protein attached to proteins as an intracellular targeting signal).. Its function is as follows. Protease that can remove conjugated ubiquitin from target proteins and polyubiquitin chains. Deubiquitinates DDB2, preventing its proteasomal degradation. The protein is Ubiquitin carboxyl-terminal hydrolase 24 (Usp24) of Mus musculus (Mouse).